The sequence spans 470 residues: Cyclin-B1-3 (470 aa).

The protein belongs to the cyclin family. Cyclin AB subfamily.

The chain is Cyclin-B1-3 (CYCB1-3) from Oryza sativa subsp. japonica (Rice).